The chain runs to 273 residues: Large ribosomal subunit protein uL2 (273 aa).

Disordered regions lie at residues 35-54 (DKKDKSGGRNNNGRITTRHI) and 222-273 (GMAM…RRNK). Over residues 229–239 (DHPHGGGEGRN) the composition is skewed to basic and acidic residues. The span at 253-273 (KGFKTRKNKRTDKYIVRRRNK) shows a compositional bias: basic residues.

Belongs to the universal ribosomal protein uL2 family. As to quaternary structure, part of the 50S ribosomal subunit. Forms a bridge to the 30S subunit in the 70S ribosome.

Its function is as follows. One of the primary rRNA binding proteins. Required for association of the 30S and 50S subunits to form the 70S ribosome, for tRNA binding and peptide bond formation. It has been suggested to have peptidyltransferase activity; this is somewhat controversial. Makes several contacts with the 16S rRNA in the 70S ribosome. The protein is Large ribosomal subunit protein uL2 of Aeromonas hydrophila subsp. hydrophila (strain ATCC 7966 / DSM 30187 / BCRC 13018 / CCUG 14551 / JCM 1027 / KCTC 2358 / NCIMB 9240 / NCTC 8049).